We begin with the raw amino-acid sequence, 362 residues long: 3-isopropylmalate dehydrogenase (362 aa).

Residue 78-91 (GPKWETLPPDEQPE) participates in NAD(+) binding. Substrate contacts are provided by R99, R109, R138, and D227. Residues D227, D251, and D255 each contribute to the Mg(2+) site. Residue 285–297 (GSAPDIAGQGIAN) coordinates NAD(+).

The protein belongs to the isocitrate and isopropylmalate dehydrogenases family. LeuB type 1 subfamily. As to quaternary structure, homodimer. The cofactor is Mg(2+). Mn(2+) is required as a cofactor.

It localises to the cytoplasm. It carries out the reaction (2R,3S)-3-isopropylmalate + NAD(+) = 4-methyl-2-oxopentanoate + CO2 + NADH. The protein operates within amino-acid biosynthesis; L-leucine biosynthesis; L-leucine from 3-methyl-2-oxobutanoate: step 3/4. Catalyzes the oxidation of 3-carboxy-2-hydroxy-4-methylpentanoate (3-isopropylmalate) to 3-carboxy-4-methyl-2-oxopentanoate. The product decarboxylates to 4-methyl-2 oxopentanoate. The chain is 3-isopropylmalate dehydrogenase from Geobacter metallireducens (strain ATCC 53774 / DSM 7210 / GS-15).